The sequence spans 355 residues: MNIKILKILVGGLFFLSLNAHLWGKQDNSFLGIGERAYKSGNYSKAASYFKKACNDGVSEGCTQLGIIYENGQGTRIDYKKALEYYKTACQADDREGCFGLGGLYDEGLGTAQNYQEAIDAYAKACVLKHPESCYNLGIIYDRKIKGNAAQAVTYYQKSCNFDMAKGCYILGTAYEKGFLEVKQSNHKAVIYYLKACRLNEGQACRALGSLFENGDAGLDEDFEVAFDYLQKACALNNSGGCASLGSMYMLGRYVKKDPQKAFNYFKQACDMGSAVSCSRMGFMYSQGDTVSKDLRKALDNYERGCDMGDEVGCFALAGMYYNMKDKENAIMIYDKGCKLGMKQACENLTKLRGY.

A signal peptide spans 1-22; that stretch reads MNIKILKILVGGLFFLSLNAHL. 8 TPR repeats span residues 27–60, 63–96, 98–131, 132–166, 202–240, 245–275, 276–311, and 312–344; these read DNSF…GVSE, TQLG…DDRE, CFGL…LKHP, ESCY…DMAK, GQAC…NNSG, LGSM…MGSA, VSCS…MGDE, and VGCF…GMKQ. Disulfide bonds link Cys-54-Cys-62, Cys-90-Cys-98, Cys-126-Cys-134, Cys-160-Cys-168, Cys-197-Cys-205, Cys-234-Cys-242, Cys-270-Cys-278, Cys-306-Cys-314, and Cys-338-Cys-346.

It belongs to the hcp beta-lactamase family.

The protein localises to the secreted. It catalyses the reaction a beta-lactam + H2O = a substituted beta-amino acid. May hydrolyze 6-aminopenicillinic acid and 7-aminocephalosporanic acid (ACA) derivatives. This Helicobacter pylori (strain J99 / ATCC 700824) (Campylobacter pylori J99) protein is Putative beta-lactamase HcpE (hcpE).